Here is a 314-residue protein sequence, read N- to C-terminus: CD-NTase-associated protein 12 (314 aa).

One can recognise a TIR domain in the interval 5 to 129 (RIFIGSSSEE…VKGISLARFK (125 aa)). Positions 160 to 314 (SSTLAAVYYE…DLIKIVDEDN (155 aa)) are STING domain. Residues Phe-171, Pro-234, and Asp-252 each coordinate 3',3'-c-di-GMP.

In the C-terminal section; belongs to the bacterial STING family. In terms of assembly, homodimer. Forms homodimers; in the presence of c-di-GMP forms filaments with an ordered array of parallel-stacked subunits.

It catalyses the reaction NAD(+) + H2O = ADP-D-ribose + nicotinamide + H(+). Its activity is regulated as follows. NAD(+) hydrolase activity is strongly stimulated by c-di-GMP, weakly by 3'3'-cGAMP, very weakly by c-di-AMP but not at all by 2'3'-cGAMP. Self-association of TIR domains is required for NADase activity. Its function is as follows. Effector protein of a CBASS antiviral system with NAD(+) hydrolase activity. CBASS (cyclic oligonucleotide-based antiphage signaling system) provides immunity against bacteriophage. The CD-NTase protein synthesizes cyclic nucleotides in response to infection; these serve as specific second messenger signals. The signals activate a diverse range of effectors, leading to bacterial cell death and thus abortive phage infection. A type I-(GG) CBASS system. In terms of biological role, binds c-di-GMP (synthesized by the cognate CdnE encoded upstream in the same operon), and about 10-fold less well 3'3'-cGAMP, but not c-di-AMP, 2'-3'-cGAMP or cUMP-AMP (tested without the N-terminal TIR domain). Upon activation by c-di-GMP forms filaments which hydrolyze NAD(+); filament formation is required for enzyme activation. This is CD-NTase-associated protein 12 from Capnocytophaga granulosa (strain ATCC 51502 / DSM 11449 / JCM 8566 / LMG 16022 / NCTC 12948 / B0611).